Here is a 536-residue protein sequence, read N- to C-terminus: Plasmepsin V (536 aa).

The first 34 residues, 1–34 (MVGASLGPPGRGSLSRLIRLVICVLTLCALSVQG), serve as a signal peptide directing secretion. At 35-492 (RSESTEGHSK…RKDNIFLKIP (458 aa)) the chain is on the lumenal side. The region spanning 62-462 (YFLDIDIGTP…DIQKNRIGFV (401 aa)) is the Peptidase A1 domain. D80 is a catalytic residue. Intrachain disulfides connect C90/C172, C93/C96, C117/C128, C122/C133, C220/C466, C337/C382, and C391/C427. Low complexity predominate over residues 244–258 (SKSVSGQGSGPVSES). Residues 244 to 264 (SKSVSGQGSGPVSESLSESGE) form a disordered region. D313 is a catalytic residue. The chain crosses the membrane as a helical span at residues 493 to 513 (FFYLYSLFVVFALSVLLSLVF). Residues 514–536 (YVRRLYHMEYSPLPSEGKAPADA) are Cytoplasmic-facing.

The protein belongs to the peptidase A1 family. As to quaternary structure, component of a complex composed of SPC25 and PMV; the interaction is mediated via the transmembrane domains. The complex interacts with the SEC61 channel-forming translocon complex and is involved in the recognition and import of PEXEL motif-containing proteins into the ER for subsequent export. It is not clear if the zymogen has a cleavable propeptide. Cleavage of the putative propeptide is dispensable for catalytic activity.

It is found in the endoplasmic reticulum membrane. Its activity is regulated as follows. Inhibited by peptidomimetic inhibitors such as WEHI-842. Its function is as follows. During the asexual blood stage, plays an essential role in the export of several proteins into the host erythrocytes by cleaving the pentameric localization motif RxLxE/Q/D (termed Plasmodium export element (PEXEL)) located downstream of the N-terminal secretory signal sequence. Specifically, cleaves after the leucine residue in the RxLxE/Q/D (or RxLxxE) motif of exported proteins including EMP1. Also, by regulating protein export, plays an essential role in gametocyte development and thus parasite transmission to the mosquito vector. The protein is Plasmepsin V of Plasmodium vivax (strain Salvador I).